Reading from the N-terminus, the 229-residue chain is NAD-dependent protein deacetylase (229 aa).

The Deacetylase sirtuin-type domain maps to 1 to 229 (MNKLNEALKK…SDAVKVFAEI (229 aa)). Positions 20, 32, 96, 98, 99, 114, 181, 182, 205, and 223 each coordinate NAD(+). Nicotinamide-binding residues include I98 and D99. The active-site Proton acceptor is H114.

It belongs to the sirtuin family. Class U subfamily.

The protein resides in the cytoplasm. It catalyses the reaction N(6)-acetyl-L-lysyl-[protein] + NAD(+) + H2O = 2''-O-acetyl-ADP-D-ribose + nicotinamide + L-lysyl-[protein]. NAD-dependent protein deacetylase which modulates the activities of several enzymes which are inactive in their acetylated form. This Listeria monocytogenes serotype 4b (strain F2365) protein is NAD-dependent protein deacetylase.